Reading from the N-terminus, the 178-residue chain is Colicin-A immunity protein (178 aa).

The Cytoplasmic segment spans residues 1-13 (MMNEHSIDTDNRK). A helical transmembrane segment spans residues 14–37 (ANNALYLFIIIGLIPLLCIFVVYY). The Periplasmic segment spans residues 38 to 68 (KTPDALLLRKIATSTENLPSITSSYNPLMTK). Residues 69–89 (VMDIYCKTAPFLALILYILTF) traverse the membrane as a helical segment. Residues 90–105 (KIRKLINNTDRNTVLR) are Cytoplasmic-facing. Residues 106-123 (SCLLSPLVYAAIVYLFCF) form a helical membrane-spanning segment. The Periplasmic segment spans residues 124–142 (RNFELTTAGRPVRLMATND). A helical membrane pass occupies residues 143 to 165 (ATLLLFYIGLYSIIFFTTYITLF). Topologically, residues 166–178 (TPVTAFKLLKKRQ) are cytoplasmic.

It localises to the cell inner membrane. This protein is able to protect a cell, which harbors the plasmid ColA encoding colicin A, against colicin A. The protein is Colicin-A immunity protein (cai) of Citrobacter freundii.